The sequence spans 179 residues: Stress response regulator gls24 homolog (179 aa).

The interval 147-179 (TSEFTSHQVENVKASVDNGVEKLQDQKAEPRVK) is disordered. Positions 165-179 (GVEKLQDQKAEPRVK) are enriched in basic and acidic residues.

This sequence belongs to the asp23 family.

This chain is Stress response regulator gls24 homolog, found in Streptococcus pyogenes serotype M28 (strain MGAS6180).